A 289-amino-acid polypeptide reads, in one-letter code: Phosphatidylserine decarboxylase proenzyme (289 aa).

Catalysis depends on charge relay system; for autoendoproteolytic cleavage activity residues Asp88, His145, and Ser251. The active-site Schiff-base intermediate with substrate; via pyruvic acid; for decarboxylase activity is Ser251. Pyruvic acid (Ser); by autocatalysis is present on Ser251.

Belongs to the phosphatidylserine decarboxylase family. PSD-B subfamily. Prokaryotic type I sub-subfamily. As to quaternary structure, heterodimer of a large membrane-associated beta subunit and a small pyruvoyl-containing alpha subunit. The cofactor is pyruvate. In terms of processing, is synthesized initially as an inactive proenzyme. Formation of the active enzyme involves a self-maturation process in which the active site pyruvoyl group is generated from an internal serine residue via an autocatalytic post-translational modification. Two non-identical subunits are generated from the proenzyme in this reaction, and the pyruvate is formed at the N-terminus of the alpha chain, which is derived from the carboxyl end of the proenzyme. The autoendoproteolytic cleavage occurs by a canonical serine protease mechanism, in which the side chain hydroxyl group of the serine supplies its oxygen atom to form the C-terminus of the beta chain, while the remainder of the serine residue undergoes an oxidative deamination to produce ammonia and the pyruvoyl prosthetic group on the alpha chain. During this reaction, the Ser that is part of the protease active site of the proenzyme becomes the pyruvoyl prosthetic group, which constitutes an essential element of the active site of the mature decarboxylase.

Its subcellular location is the cell membrane. The enzyme catalyses a 1,2-diacyl-sn-glycero-3-phospho-L-serine + H(+) = a 1,2-diacyl-sn-glycero-3-phosphoethanolamine + CO2. Its pathway is phospholipid metabolism; phosphatidylethanolamine biosynthesis; phosphatidylethanolamine from CDP-diacylglycerol: step 2/2. Functionally, catalyzes the formation of phosphatidylethanolamine (PtdEtn) from phosphatidylserine (PtdSer). This Polaromonas naphthalenivorans (strain CJ2) protein is Phosphatidylserine decarboxylase proenzyme.